A 322-amino-acid chain; its full sequence is ATP-dependent 6-phosphofructokinase 1 (322 aa).

Gly11 provides a ligand contact to ATP. 21-25 lines the ADP pocket; that stretch reads RAVVR. ATP contacts are provided by residues 72-73 and 102-105; these read RS and GDGT. Asp103 serves as a coordination point for Mg(2+). 126 to 128 contributes to the substrate binding site; it reads TID. Asp128 (proton acceptor) is an active-site residue. Arg155 provides a ligand contact to ADP. Substrate is bound by residues Arg163 and 170 to 172; that span reads MGR. Residues 186–188, Arg212, and 214–216 contribute to the ADP site; these read GAE and KKS. Residues Glu223, Arg246, and 252 to 255 each bind substrate; that span reads HIQR.

Belongs to the phosphofructokinase type A (PFKA) family. ATP-dependent PFK group I subfamily. Prokaryotic clade 'B1' sub-subfamily. Homotetramer. The cofactor is Mg(2+).

It is found in the cytoplasm. It carries out the reaction beta-D-fructose 6-phosphate + ATP = beta-D-fructose 1,6-bisphosphate + ADP + H(+). It participates in carbohydrate degradation; glycolysis; D-glyceraldehyde 3-phosphate and glycerone phosphate from D-glucose: step 3/4. With respect to regulation, allosterically activated by ADP and other diphosphonucleosides. Allosterically inhibited by phosphoenolpyruvate which induces the dissociation of the active tetramer into an inactive two-subunit forms. Catalyzes the phosphorylation of D-fructose 6-phosphate to fructose 1,6-bisphosphate by ATP, the first committing step of glycolysis. The sequence is that of ATP-dependent 6-phosphofructokinase 1 from Thermus thermophilus (strain ATCC 27634 / DSM 579 / HB8).